A 3674-amino-acid chain; its full sequence is MAGQPHSPRELLGAAGHRSRRPSTELRVPPSPSLTMDSQYETGHIRKLQARHMQMQEKTFTKWINNVFQCGQAGIKIRNLYTELADGIHLLRLLELISGEALPPPSRGRLRVHFLENSSRALAFLRAKVPVPLIGPENIVDGDQTLILGLIWVIILRFQISHISLDKEEFGASAALLSTKEALLVWCQRKTASYTNVNITDFSRSWSDGLGFNALIHAHRPDLLDYGSLRPDRPLHNLAFAFLVAEQELGIAQLLDPEDVAAAQPDERSIMTYVSLYYHYCSRLHQGQTVQRRLTKILLQLQETELLQTQYEQLVADLLRWIAEKQMQLEARDFPDSLPAMRQLLAAFTIFRTQEKPPRLQQRGAAEALLFRLQTALQAQNRRPFLPHEGLGLAELSQCWAGLEWAEAARSQALQQRLLQLQRLETLARRFQHKAALRESFLKDAEQVLDQARAPPASLATVEAAVQRLGMLEAGILPQEGRFQALAEIADILRQEQYHSWADVARRQEEVTVRWQRLLQHLQGQRKQVADMQAVLSLLQEVEAASHQLEELQEPARSTACGQQLAEVVELLQRHDLLEAQVSAHGAHVSHLAQQTAELDSSLGTSVEVLQAKARTLAQLQQSLVALVRARRALLEQTLQRAEFLRNCEEEEAWLKECGQRVGNAALGRDLSQIAGALQKHKALEAEVHRHQAVCVDLVRRGRDLSARRPPTQPDPGERAEAVQGGWQLLQTRVVGRGARLQTALLVLQYFADAAEAASWLRERRSSLERASCGQDQAAAETLLRRHVRLERVLRAFAAELRRLEEQGRAASARASLFTVNSALSPPGESLRNPGPWSEASCHPGPGDAWKMALPAEPDPDFDPNTILQTQDHLSQDYESLRALAQLRRARLEEAMALFGFCSSCGELQLWLEKQTVLLQRVQPQADTLEVMQLKYENFLTALAVGKGLWAEVSSSAEQLRQRYPGNSTQIQRQQEELSQRWGQLEALKREKAVQLAHSVEVCSFLQECGPTQVQLRDVLLQLEALQPGSSEDTCHALQLAQKKTLVLERRVHFLQSVVVKVEEPGYAESQPLQGQVETLQGLLKQVQEQVAQRARRQAETQARQSFLQESQQLLLWAESVQAQLRSKEVSVDVASAQRLLREHQDLLEEIHLWQERLQQLDAQSQPMAALDCPDSQEVPNTLRVLGQQGQELKVLWEQRQQWLQEGLELQKFGREVDGFTATCANHQAWLHLDNLGEDVREALSLLQQHREFGRLLSTLGPRAEALRAHGEKLVQSQHPAAHTVREQLQSIQAQWTRLQGRSEQRRRQLLASLQLQEWKQDVAELMQWMEEKGLMAAHEPSGARRNILQTLKRHEAAESELLATRRHVEALQQVGRELLSRRPCGQEDIQTRLQGLRSKWEALNRKMTERGDELQQAGQQEQLLRQLQDAKEQLEQLEGALQSSETGQDLRSSQRLQKRHQQLESESRTLAAKMAALASMAHGMAASPAILEETQKHLRRLELLQGHLAIRGLQLQASVELHQFCHLSNMELSWVAEHMPHGSPTSYTECLNGAQSLHRKHKELQVEVKAHQGQVQRVLSSGRSLAASGHPQAQHIVEQCQELEGHWAELERACEARAQCLQQAVTFQQYFLDVSELEGWVEEKRPLVSSRDYGRDEAATLRLINKHQALQEELAIYWSSMEELDQTAQTLTGPEVPEQQRVVQERLREQLRALQELAATRDRELEGTLRLHEFLREAEDLQGWLASQKQAAKGGESLGEDPEHALHLCTKFAKFQHQVEMGSQRVAACRLLAESLLERGHSAGPMVRQRQQDLQTAWSELWELTQARGHALRDTETTLRVHRDLLEVLTQVQEKATSLPNNVARDLCGLEAQLRSHQGLERELVGTERQLQELLETAGRVQKLCPGPQAHAVQQRQQAVTQAWAVLQRRMEQRRAQLERARLLARFRTAVRDYASWAARVRQDLQVEESSQEPSSGPLKLSAHQWLRAELEAREKLWQQATQLGQQALLAAGTPTKEVQEELRALQDQRDQVYQTWARKQERLQAEQQEQLFLRECGRLEEILAAQEVSLKTSALGSSVEEVEQLIRKHEVFLKVLTAQDKKEAALRERLKTLRRPRVRDRLPILLQRRMRVKELAESRGHALHASLLMASFTQAATQAEDWIQAWAQQLKEPVPPGDLRDKLKPLLKHQAFEAEVQAHEEVMTSVAKKGEALLAQSHPRAGEVSQRLQGLRKHWEDLRQAMALRGQELEDRRNFLEFLQRVDLAEAWIQEKEVKMNVGDLGQDLEHCLQLRRRLREFRGNSAGDTVGDACIRSISDLSLQLKNRDPEEVKIICQRRSQLNNRWASFHGNLLRYQQQLEGALEIHVLSRELDNVTKRIQEKEALIQALDCGKDLESVQRLLRKHEELEREVHPIQAQVESLEREVGRLCQRSPEAAHGLRHRQQEVAESWWQLRSRAQKRREALDALHQAQKLQAMLQELLVSAQRLRAQMDTSPAPRSPVEARRMLEEHQECKAELDSWTDSISLARSTGQQLLTAGHPFSSDIRQVLAGLEQELSSLEGAWQEHQLQLQQALELQLFLSSVEKMERWLCSKEDSLASEGLWDPLAPMEPLLWKHKMLEWDLEVQAGKISALEATARGLHQGGHPEAQSALGRCQAMLLRKEALFRQAGTRRHRLEELRQLQAFLQDSQEVAAWLREKNLVALEEGLLDTAMLPAQLQKQQNFQAELDASMHQQQELQREGQRLLQGGHPASEAIQERLEELGALWGELQDNSQKKVAKLQKACEALRLRRSMEELENWLEPIEVELRAPTVGQALPGVGELLGTQRELEAAVDKKARQAEALLGQAQAFVREGHCLAQDVEEQARRLLQRFKSLREPLQERRTALEARSLLLKFFRDADEEMAWVQEKLPLAAAQDYGQSLSAVRHLQEQHQNLESEMSSHEALTRVVLGTGYKLVQAGHFAAHEVAARVQQLEKAMAHLRAEAARRRLLLQQAQEAQQFLTELLEAGSWLAERGHVLDSEDMGHSAEATQALLRRLEATKRDLEAFSPRIERLQQTAALLESRKNPESPKVLAQLQAVREAHAELLRRAEARGHGLQEQLQLHQLERETLLLDAWLTTKAATAESQDYGQDLEGVKVLEEKFDAFRKEVQSLGQAKVYALRKLAGTLERGAPRRYPHIQAQRSRIEAAWERLDQAIKARTENLAAAHEVHSFQQAAAELQGRMQEKTALMKGEDGGHSLSSVRTLQQQHRRLERELEAMEKEVARLQTEACRLGQLHPAAPGGLAKVQEAWATLQAKAQERGQWLAQAAQGHAFLGRCQELLAWAQERQELASSEELAEDVAGAEQLLGQHEELGQEIRECRLQAQDLRQEGQQLVDNSHFMSAEVTECLQELEGRLQELEEAWALRWQRCAESWGLQKLRQRLEQAEAWLACWEGLLLKPDYGHSVSDVELLLHRHQDLEKLLAAQEEKFAQMQKTEMEQELLLQPQELKPGRAGSSLTSFQWRPSGHQGLGAQLAETRDPQDAKGTPTMEGSLEFKQHLLPGGRQPSSSSWDSCRGNLQGSSLSLFLDERMAAEKVASIALLDLTGARCERLRGRHGRKHTFSLRLTSGAEILFAAPSEEQAESWWRALGSTAAQSLSPKLKAKPVSSLNECTTKDARPGCLLRSDP.

The disordered stretch occupies residues 1–37; the sequence is MAGQPHSPRELLGAAGHRSRRPSTELRVPPSPSLTMD. Residues 1 to 279 are actin-binding; the sequence is MAGQPHSPRE…IMTYVSLYYH (279 aa). 2 consecutive Calponin-homology (CH) domains span residues 54–159 and 177–282; these read QMQE…LRFQ and LSTK…HYCS. 8 Spectrin repeats span residues 307–416, 428–529, 642–742, 747–810, 900–996, 1103–1206, 1209–1311, and 1315–1417; these read LQTQ…ALQQ, ARRF…RKQV, AEFL…ARLQ, VLQY…QGRA, GFCS…AVQL, ARQS…WLQE, ELQK…RQLL, and QLQE…ELQQ. The tract at residues 1441-1469 is disordered; the sequence is ALQSSETGQDLRSSQRLQKRHQQLESESR. Over residues 1442–1456 the composition is skewed to polar residues; the sequence is LQSSETGQDLRSSQR. 19 Spectrin repeats span residues 1521-1624, 1628-1727, 1731-1835, 1842-1940, 1944-2046, 2052-2146, 2150-2253, 2256-2361, 2366-2467, 2471-2574, 2577-2680, 2683-2784, 2791-2890, 2894-2997, 3000-3103, 3106-3209, 3213-3311, 3318-3415, and 3422-3488; these read ELHQ…CLQQ, FQQY…RELE, RLHE…ALRD, VHRD…AQLE, LLAR…ERLQ, QLFL…HALH, LMAS…ELED, NFLE…QQLE, IHVL…EALD, QAQK…QLQQ, ELQL…RLEE, QLQA…AKLQ, RLRR…TALE, LLLK…LLQQ, EAQQ…GLQE, QLHQ…ENLA, EVHS…QWLA, AFLG…RWQR, and LQKL…EQEL. The 109-residue stretch at 3533–3641 folds into the PH domain; that stretch reads TPTMEGSLEF…WWRALGSTAA (109 aa).

The protein belongs to the spectrin family. In terms of assembly, probably associates with an alpha chain. Interacts (via C-terminus) with TRPC4. As to expression, expressed at very low levels in many tissues, with strongest expression in cerebellum, spinal cord, stomach, pituitary gland, liver, pancreas, salivary gland, kidney, bladder, and heart.

The protein resides in the cytoplasm. Its subcellular location is the cytoskeleton. The sequence is that of Spectrin beta chain, non-erythrocytic 5 (SPTBN5) from Homo sapiens (Human).